Here is a 932-residue protein sequence, read N- to C-terminus: Lon protease homolog 2, peroxisomal (932 aa).

The Lon N-terminal domain maps to 11–260; sequence LSLVPLPKGS…RVVDILNKQN (250 aa). The tract at residues 298-328 is disordered; it reads RRGIPGASGTPPPGLGGRNNEADEKESNELD. The segment covering 317–328 has biased composition (basic and acidic residues); sequence NEADEKESNELD. 486–493 is a binding site for ATP; sequence GPPGTGKT. Positions 729-916 constitute a Lon proteolytic domain; the sequence is HGRPGVVTGL…WEAIRHIWPD (188 aa). Active-site residues include Ser-822 and Lys-865. The Microbody targeting signal signature appears at 930–932; it reads SRL.

It belongs to the peptidase S16 family.

The protein resides in the peroxisome matrix. The enzyme catalyses Hydrolysis of proteins in presence of ATP.. Its function is as follows. ATP-dependent serine protease that mediates the selective degradation of misfolded and unassembled polypeptides in the peroxisomal matrix. Necessary for type 2 peroxisome targeting signal (PTS2)-containing protein processing and facilitates peroxisome matrix protein import. This chain is Lon protease homolog 2, peroxisomal, found in Emericella nidulans (strain FGSC A4 / ATCC 38163 / CBS 112.46 / NRRL 194 / M139) (Aspergillus nidulans).